Consider the following 1031-residue polypeptide: Semaphorin-6A (1031 aa).

Positions 1-18 are cleaved as a signal peptide; the sequence is MRPAALLLCLTLLHCAGA. The Extracellular segment spans residues 19 to 649; it reads GFPEDSEPIS…KSNDQLVPVT (631 aa). Residues 24-512 form the Sema domain; it reads SEPISISHGN…FSTCVIKVPL (489 aa). N-linked (GlcNAc...) asparagine glycans are attached at residues Asn-33, Asn-49, and Asn-65. Cystine bridges form between Cys-107–Cys-117, Cys-135–Cys-144, Cys-258–Cys-369, and Cys-283–Cys-328. The N-linked (GlcNAc...) asparagine glycan is linked to Asn-282. Asn-434 and Asn-461 each carry an N-linked (GlcNAc...) asparagine glycan. 4 disulfide bridges follow: Cys-477–Cys-506, Cys-515–Cys-533, Cys-521–Cys-568, and Cys-525–Cys-542. The helical transmembrane segment at 650–670 threads the bilayer; the sequence is LLAIAVILAFVMGAVFSGIIV. The Cytoplasmic portion of the chain corresponds to 671–1031; the sequence is YCVCDHRRKD…TSMKPNDACT (361 aa). Ser-698 carries the post-translational modification Phosphoserine. 3 disordered regions span residues 754–777, 861–902, and 914–1031; these read ALPTPESTPTLQQKRKPNRGSREW, SSKS…TGLS, and GLEY…DACT. Polar residues predominate over residues 921 to 931; the sequence is YPTNSLTRSHQ. Residues 932-951 are compositionally biased toward low complexity; that stretch reads TTTLKRNNTNSSNSSHLSRN. Ser-953 carries the post-translational modification Phosphoserine. Polar residues-rich tracts occupy residues 971–998 and 1019–1031; these read QVHSSQPSGQAVTVSRQPSLNAYNSLTR and PLSTSMKPNDACT.

The protein belongs to the semaphorin family. In terms of assembly, active as a homodimer or oligomer. The SEMA6A homodimer interacts with a PLXNA2 homodimer, giving rise to a heterotetramer. Interacts with EVL. Particularly high levels in spinal cord, cerebellum, metencephalon, superior and inferior colliculus, diencephalon, olfactory bulb and eye.

The protein resides in the cell membrane. In terms of biological role, cell surface receptor for PLXNA2 that plays an important role in cell-cell signaling. Required for normal granule cell migration in the developing cerebellum. Promotes reorganization of the actin cytoskeleton and plays an important role in axon guidance in the developing central nervous system. Can act as repulsive axon guidance cue. Has repulsive action towards migrating granular neurons. May play a role in channeling sympathetic axons into the sympathetic chains and controlling the temporal sequence of sympathetic target innervation. The sequence is that of Semaphorin-6A (Sema6a) from Mus musculus (Mouse).